Here is a 1538-residue protein sequence, read N- to C-terminus: MGVPTKISILGRESIVADFGIWRNYVAKDLLSSCSSSTYVLISDTNLTPLYLEGFQKSFEDAATNVSPKPRLLTYEIPPGESSKSRETKADIEDWMLARQPPCGRDTVIIALGGGVIGDLIGFVAATYMRGVRFVQVPTTLLAMVDSSIGGKTAIDTPNGKNLIGAIWQPQRIYLDMEFLNTLPEREFINGMAEVIKTAAISSEEKFAALERDAETILAAVKSKNTPERPRFSGIEETLKRTILSSAEFKAQVVSADEREGGLRNLLNFGHSIGHAIEAILAPQVLHGECISIGMVKEAELARHLGILNNVSVSRISKCLANYGLPTSLKDQRIKKLTAGKHCSVEQLIAYMGVDKKNDGPKKKVVLLSAIGRTHEPRASTVSNEEIQIVLAPSIEVSPGVPKGLDVTCTPPGSKSISNRALVLAALGSGTCRLKNLLHSDDTEVMLNALERLGAATFSWEDEGEVLVVSGKGGRMEASSSELYVGNAGTASRFLTTVATLARKSSVDSSVLTGNARMKQRPIGDLVDALAANGASIEYLENLGCLPLKIAASGGFAGGEINLAAKVSSQYVSSLLMCAPYAKTPVTLRLVGGKPISQPYIDMTTAMMRSFGVEVKKSETEEHTYHIPLGFYTNPVEYIVESDASSATYPLAAAAITGTSCTVPNIGSKSLQGDARFAVDVLRPMGCAVDQNDFSTRVTGPPGGILSPLPNINMEPMTDAFLTASVLAAVARGKGSNRTTRIFGIANQRVKECNRIKAMKDELAKFGVVCREHDDGLEIDGIDRATLHHPSDGVYCYDDHRVAMSFSVLSLVAHEPTLILEKECVGKTWPGWWDCLSQTFKVKLDGKEVGKRTETNPIVHVNKSAASIFIIGMRGAGKTTSGFWVSKALQRPFIDLDDELERTEAYVEDMMSVWLRRKPWYEECSNVQYYSRLTGLDGMTQVSGGFNRFLKVITGEVDSLAKMRRKQNTFFVSLTLPDLGLAAHILKEVTLGSDAVELRVDLLKDPQSDNEIPSVDYVAEQISVLRSRTSVPLVFTIRTKGQGGRFPDDAYDAALQLYRLAVRMGSEFVDLEISFPEQLLRTVTEMKGFSTIIASHHDPKGQLSWVNGSWIQFYNKALQYGDVIKLVGVARSIDDNISLKKFKTWAEEKHNIPIIAINMGDKGQLSRMLNGFMTPVSHPSLPFKAAPGQLSAREIRKGLSLIGEIKAKKFAVIGNPVSASRSPAMHNTLFRQMGLPHTYGTLETDNPEVAKEFIRSPGFGGASVTIPLKLSIMPLLDEIAPEAMSIGAVNTIVCAPPAPDSKSQTPRLIGHNTDWQGMVRCLSDAGAYAAATPTTASAGLVIGGGGTARAAIFALQNMGYSPIYVLGRSPDKLSSMTSTFHTDHDIRILEDVKALESLPTVAIGTIPGDKPIEPHMREILCKLFDLCEKANSDTEQARGVSTKRILLEMAYKPSVTSLMQLASDSGWTVLPGLEALVAQGVYQCEYWTNITPVYEYARCWKVYDVKLINCERGNAISLLVLEAFTHAFYEHPVLNHSS.

Residues 1 to 384 are 3-dehydroquinate synthase; it reads MGVPTKISIL…HEPRASTVSN (384 aa). NAD(+)-binding positions include 44 to 46, 81 to 84, 114 to 116, and Asp119; these read DTN, ESSK, and GGV. Arg130 serves as a coordination point for 7-phospho-2-dehydro-3-deoxy-D-arabino-heptonate. 139–140 contacts NAD(+); it reads TT. 7-phospho-2-dehydro-3-deoxy-D-arabino-heptonate is bound by residues Asp146 and Lys152. Residue Lys161 participates in NAD(+) binding. Position 162 (Asn162) interacts with 7-phospho-2-dehydro-3-deoxy-D-arabino-heptonate. Residues 179 to 182 and Asn190 each bind NAD(+); that span reads FLNT. A Zn(2+)-binding site is contributed by Glu194. 7-phospho-2-dehydro-3-deoxy-D-arabino-heptonate is bound by residues 194–197 and Lys250; that span reads EVIK. The Proton acceptor; for 3-dehydroquinate synthase activity role is filled by Glu260. Residues 264-268 and His271 contribute to the 7-phospho-2-dehydro-3-deoxy-D-arabino-heptonate site; that span reads RNLLN. Position 271 (His271) interacts with Zn(2+). The Proton acceptor; for 3-dehydroquinate synthase activity role is filled by His275. Residues His287 and Lys356 each contribute to the 7-phospho-2-dehydro-3-deoxy-D-arabino-heptonate site. His287 is a Zn(2+) binding site. Residues 397–842 form an EPSP synthase region; sequence VSPGVPKGLD…WDCLSQTFKV (446 aa). Cys824 acts as the For EPSP synthase activity in catalysis. The tract at residues 866–973 is shikimate kinase; that stretch reads ASIFIIGMRG…RRKQNTFFVS (108 aa). 872-879 serves as a coordination point for ATP; it reads GMRGAGKT. The interval 974 to 1194 is 3-dehydroquinase; that stretch reads LTLPDLGLAA…AAPGQLSARE (221 aa). Residue His1097 is the Proton acceptor; for 3-dehydroquinate dehydratase activity of the active site. Residue Lys1125 is the Schiff-base intermediate with substrate; for 3-dehydroquinate dehydratase activity of the active site. The segment at 1207-1538 is shikimate dehydrogenase; that stretch reads AKKFAVIGNP…YEHPVLNHSS (332 aa).

The protein in the N-terminal section; belongs to the sugar phosphate cyclases superfamily. Dehydroquinate synthase family. It in the 2nd section; belongs to the EPSP synthase family. This sequence in the 3rd section; belongs to the shikimate kinase family. In the 4th section; belongs to the type-I 3-dehydroquinase family. The protein in the C-terminal section; belongs to the shikimate dehydrogenase family. As to quaternary structure, homodimer. Requires Zn(2+) as cofactor.

It localises to the cytoplasm. The enzyme catalyses 7-phospho-2-dehydro-3-deoxy-D-arabino-heptonate = 3-dehydroquinate + phosphate. It catalyses the reaction 3-dehydroquinate = 3-dehydroshikimate + H2O. It carries out the reaction shikimate + NADP(+) = 3-dehydroshikimate + NADPH + H(+). The catalysed reaction is shikimate + ATP = 3-phosphoshikimate + ADP + H(+). The enzyme catalyses 3-phosphoshikimate + phosphoenolpyruvate = 5-O-(1-carboxyvinyl)-3-phosphoshikimate + phosphate. It functions in the pathway metabolic intermediate biosynthesis; chorismate biosynthesis; chorismate from D-erythrose 4-phosphate and phosphoenolpyruvate: step 2/7. Its pathway is metabolic intermediate biosynthesis; chorismate biosynthesis; chorismate from D-erythrose 4-phosphate and phosphoenolpyruvate: step 3/7. The protein operates within metabolic intermediate biosynthesis; chorismate biosynthesis; chorismate from D-erythrose 4-phosphate and phosphoenolpyruvate: step 4/7. It participates in metabolic intermediate biosynthesis; chorismate biosynthesis; chorismate from D-erythrose 4-phosphate and phosphoenolpyruvate: step 5/7. It functions in the pathway metabolic intermediate biosynthesis; chorismate biosynthesis; chorismate from D-erythrose 4-phosphate and phosphoenolpyruvate: step 6/7. Functionally, the AROM polypeptide catalyzes 5 consecutive enzymatic reactions in prechorismate polyaromatic amino acid biosynthesis. The protein is Pentafunctional AROM polypeptide of Ajellomyces capsulatus (strain NAm1 / WU24) (Darling's disease fungus).